A 320-amino-acid chain; its full sequence is Ferrochelatase (320 aa).

Residues histidine 194 and glutamate 275 each contribute to the Fe cation site.

Belongs to the ferrochelatase family. In terms of assembly, monomer.

It localises to the cytoplasm. It catalyses the reaction heme b + 2 H(+) = protoporphyrin IX + Fe(2+). It functions in the pathway porphyrin-containing compound metabolism; protoheme biosynthesis; protoheme from protoporphyrin-IX: step 1/1. Its function is as follows. Catalyzes the ferrous insertion into protoporphyrin IX. This is Ferrochelatase from Escherichia coli O81 (strain ED1a).